A 187-amino-acid polypeptide reads, in one-letter code: Adenine phosphoribosyltransferase (187 aa).

It belongs to the purine/pyrimidine phosphoribosyltransferase family. As to quaternary structure, homodimer.

The protein localises to the cytoplasm. It carries out the reaction AMP + diphosphate = 5-phospho-alpha-D-ribose 1-diphosphate + adenine. It functions in the pathway purine metabolism; AMP biosynthesis via salvage pathway; AMP from adenine: step 1/1. Catalyzes a salvage reaction resulting in the formation of AMP, that is energically less costly than de novo synthesis. This chain is Adenine phosphoribosyltransferase, found in Paracoccus denitrificans (strain Pd 1222).